The chain runs to 173 residues: Catabolic 3-dehydroquinase (173 aa).

The active-site Proton acceptor is the Tyr-26. Positions 102, 108, and 115 each coordinate substrate. The active-site Proton donor is His-128. Substrate-binding positions include 129-130 (VS) and Arg-139.

The protein belongs to the type-II 3-dehydroquinase family. As to quaternary structure, homododecamer. Adopts a ring-like structure, composed of an arrangement of two hexameric rings stacked on top of one another.

It carries out the reaction 3-dehydroquinate = 3-dehydroshikimate + H2O. Its pathway is aromatic compound metabolism; 3,4-dihydroxybenzoate biosynthesis; 3,4-dihydroxybenzoate from 3-dehydroquinate: step 1/2. 3-dehydroquinate dehydratase; part of the qa gene cluster that mediates the catabolism of quinic acid (QA) and as such, allows the use of QA as a sole carbon source. Catalyzes the second reaction in the inducible quinic acid catabolic pathway by converting 3-dehydroquinate into 3-dehydroshikimate. The qa cluster encodes 3 inducible enymes (qa-2, qa-3 and qa-4) catalyzing the first three reactions in the catabolism of quinic acid to protocatechuic acid (also known as 3,4-Dihydroxybenzoic acid). The chain is Catabolic 3-dehydroquinase from Neurospora crassa (strain ATCC 24698 / 74-OR23-1A / CBS 708.71 / DSM 1257 / FGSC 987).